A 129-amino-acid polypeptide reads, in one-letter code: Small ribosomal subunit protein uS11c (129 aa).

This sequence belongs to the universal ribosomal protein uS11 family. Part of the 30S ribosomal subunit.

It localises to the plastid. The protein resides in the chloroplast. The protein is Small ribosomal subunit protein uS11c of Pleurastrum terricola (Filamentous green alga).